A 597-amino-acid polypeptide reads, in one-letter code: DNA primase (597 aa).

Zn(2+) is bound by residues cysteine 40, histidine 43, cysteine 61, and cysteine 64. A CHC2-type zinc finger spans residues cysteine 40–cysteine 64. A Toprim domain is found at glutamine 262–glycine 342. The Mg(2+) site is built by glutamate 268, aspartate 311, and aspartate 313. Over residues leucine 429–threonine 447 the composition is skewed to basic and acidic residues. Residues leucine 429–alanine 448 are disordered.

This sequence belongs to the DnaG primase family. Monomer. Interacts with replicative helicase DnaB, as DnaB(6):DnaG(3). A stable complex DnaI(6):DnaB(6):DnaG(3) fragment can be isolated; DnaI and DnaG do not contact each other (DnaI in this complex is derived from B.subtilis). The cofactor is Zn(2+). Mg(2+) serves as cofactor.

It catalyses the reaction ssDNA + n NTP = ssDNA/pppN(pN)n-1 hybrid + (n-1) diphosphate.. Functionally, RNA polymerase that catalyzes the synthesis of short RNA molecules used as primers for DNA polymerase during DNA replication. The sequence is that of DNA primase from Geobacillus stearothermophilus (Bacillus stearothermophilus).